A 102-amino-acid chain; its full sequence is Large ribosomal subunit protein uL24 (102 aa).

It belongs to the universal ribosomal protein uL24 family. As to quaternary structure, part of the 50S ribosomal subunit.

Its function is as follows. One of two assembly initiator proteins, it binds directly to the 5'-end of the 23S rRNA, where it nucleates assembly of the 50S subunit. In terms of biological role, one of the proteins that surrounds the polypeptide exit tunnel on the outside of the subunit. The protein is Large ribosomal subunit protein uL24 of Rhizobium johnstonii (strain DSM 114642 / LMG 32736 / 3841) (Rhizobium leguminosarum bv. viciae).